The chain runs to 347 residues: MKQTIILLYGGRSAEREVSVLSAESVMRAVDYDRFTVKTFFISQSGDFIKTQEFSHAPGQEDRLMTNETIDWDKKVAPSAIYEEGAVVFPVLHGPMGEDGSVQGFLEVLKMPYVGCNILSSSLAMDKITTKRVLESAGIAQVPYVAIVEGDDVTAKIAEVEEKLAYPVFTKPSNMGSSVGISKSENQEELRQALKLAFRYDSRVLVEQGVNAREIEVGLLGNYDVKSTLPGEVVKDVAFYDYDAKYIDNKITMDIPAKISDDVVAVMRQNAETAFRAIGGLGLSRCDFFYTDKGEIFLNELNTMPGFTQWSMYPLLWDNMGISYPKLIERLVDLAKESFDKREAHLI.

An ATP-grasp domain is found at 131-333; sequence KRVLESAGIA…YPKLIERLVD (203 aa). 161–216 contributes to the ATP binding site; sequence EEKLAYPVFTKPSNMGSSVGISKSENQEELRQALKLAFRYDSRVLVEQGVNAREIE. Mg(2+) is bound by residues aspartate 287, glutamate 300, and asparagine 302.

The protein belongs to the D-alanine--D-alanine ligase family. Mg(2+) serves as cofactor. Requires Mn(2+) as cofactor.

It is found in the cytoplasm. It carries out the reaction 2 D-alanine + ATP = D-alanyl-D-alanine + ADP + phosphate + H(+). It participates in cell wall biogenesis; peptidoglycan biosynthesis. Cell wall formation. The sequence is that of D-alanine--D-alanine ligase from Streptococcus pneumoniae serotype 4 (strain ATCC BAA-334 / TIGR4).